Here is a 355-residue protein sequence, read N- to C-terminus: Biotin synthase (355 aa).

In terms of domain architecture, Radical SAM core spans 51–275; that stretch reads NTVKVNYLVN…VCPDKEIRIA (225 aa). The [4Fe-4S] cluster site is built by cysteine 66, cysteine 70, and cysteine 73. The [2Fe-2S] cluster site is built by cysteine 110, cysteine 143, cysteine 203, and arginine 273.

It belongs to the radical SAM superfamily. Biotin synthase family. In terms of assembly, homodimer. It depends on [4Fe-4S] cluster as a cofactor. The cofactor is [2Fe-2S] cluster.

It catalyses the reaction (4R,5S)-dethiobiotin + (sulfur carrier)-SH + 2 reduced [2Fe-2S]-[ferredoxin] + 2 S-adenosyl-L-methionine = (sulfur carrier)-H + biotin + 2 5'-deoxyadenosine + 2 L-methionine + 2 oxidized [2Fe-2S]-[ferredoxin]. It functions in the pathway cofactor biosynthesis; biotin biosynthesis; biotin from 7,8-diaminononanoate: step 2/2. Its function is as follows. Catalyzes the conversion of dethiobiotin (DTB) to biotin by the insertion of a sulfur atom into dethiobiotin via a radical-based mechanism. The polypeptide is Biotin synthase (Saccharopolyspora erythraea (strain ATCC 11635 / DSM 40517 / JCM 4748 / NBRC 13426 / NCIMB 8594 / NRRL 2338)).